The following is a 90-amino-acid chain: Large ribosomal subunit protein bL27 (90 aa).

The disordered stretch occupies residues 1 to 22 (MAHKKAGGSSRNGRDSESKRLG).

The protein belongs to the bacterial ribosomal protein bL27 family.

This Allorhizobium ampelinum (strain ATCC BAA-846 / DSM 112012 / S4) (Agrobacterium vitis (strain S4)) protein is Large ribosomal subunit protein bL27.